The following is a 132-amino-acid chain: MSKSLTIIWQYLRAFVLIYACLYAGIFIAGLLPITIPGSIIGMLILFVLLALQIMPPQWVNPGCNILIRYMALLFVPIGVGVMQYWDLLRAQLGPVVISCAISTLVVFVVVSWSSHLVHGERKVIGQKGKEE.

4 consecutive transmembrane segments (helical) span residues 5–25, 38–60, 66–86, and 93–113; these read LTII…LYAG, GSII…PQWV, ILIR…MQYW, and LGPV…VVSW.

The protein belongs to the UPF0299 family.

The protein localises to the cell inner membrane. The sequence is that of UPF0299 membrane protein KPN78578_25390 from Klebsiella pneumoniae subsp. pneumoniae (strain ATCC 700721 / MGH 78578).